The sequence spans 469 residues: DNA polymerase delta subunit 2 (469 aa).

Methionine 1 is subject to N-acetylmethionine. Serine 257 is subject to Phosphoserine.

It belongs to the DNA polymerase delta/II small subunit family. In terms of assembly, component of both the DNA polymerase delta and DNA polymerase zeta complexes. Component of the tetrameric DNA polymerase delta complex (Pol-delta4), which consists of POLD1/p125, POLD2/p50, POLD3/p66/p68 and POLD4/p12, with POLD1 bearing DNA polymerase and 3' to 5' proofreading exonuclease activities. Within Pol-delta4, directly interacts with POLD1, POLD3 and POLD4. Following stress caused by DNA damaging agents or by replication stress, POLD4 is degraded and Pol-delta4 is converted into a trimeric form of the complex (Pol-delta3), which consists of POLD1, POLD2 and POLD3. Pol-delta3 is the major form occurring at S phase replication sites, as well as DNA damage sites. Also observed as a dimeric complex with POLD2 (Pol-delta2 complex). Pol-delta2 is relatively insensitive to the PCNA stimulation (2-5-fold) compared to Pol-delta4 that is stimulated by over 50-fold. Contrary to the other components of Pol-delta4, does not directly interact with PCNA. As POLD1 and POLD4, directly interacts with WRNIP1; this interaction stimulates DNA polymerase delta-mediated DNA synthesis, independently of the presence of PCNA. This stimulation may be due predominantly to an increase of initiation frequency and also to increased processivity. Directly interacts with POLDIP2 and POLDIP3. Directly interacts with KCTD13/PDIP1; in the presence of PCNA, this interaction may stimulate DNA polymerase activity. Component of the tetrameric Pol-zeta complex (Pol-zeta4), which consists of REV3L, MAD2L2, POLD2 and POLD3, with REV3L bearing DNA polymerase catalytic activity. Interacts with KCTD10.

The protein resides in the nucleus. In terms of biological role, accessory component of both the DNA polymerase delta complex and the DNA polymerase zeta complex. As a component of the trimeric and tetrameric DNA polymerase delta complexes (Pol-delta3 and Pol-delta4, respectively), plays a role in high fidelity genome replication, including in lagging strand synthesis, and repair. Pol-delta3 and Pol-delta4 are characterized by the absence or the presence of POLD4. They exhibit differences in catalytic activity. Most notably, Pol-delta3 shows higher proofreading activity than Pol-delta4. Although both Pol-delta3 and Pol-delta4 process Okazaki fragments in vitro, Pol-delta3 may also be better suited to fulfill this task, exhibiting near-absence of strand displacement activity compared to Pol-delta4 and stalling on encounter with the 5'-blocking oligonucleotides. Pol-delta3 idling process may avoid the formation of a gap, while maintaining a nick that can be readily ligated. Along with DNA polymerase kappa, DNA polymerase delta carries out approximately half of nucleotide excision repair (NER) synthesis following UV irradiation. Under conditions of DNA replication stress, required for the repair of broken replication forks through break-induced replication (BIR). Involved in the translesion synthesis (TLS) of templates carrying O6-methylguanine or abasic sites performed by Pol-delta4, independently of DNA polymerase zeta (REV3L) or eta (POLH). Facilitates abasic site bypass by DNA polymerase delta by promoting extension from the nucleotide inserted opposite the lesion. Also involved in TLS as a component of the DNA polymerase zeta complex. Along with POLD3, dramatically increases the efficiency and processivity of DNA synthesis of the DNA polymerase zeta complex compared to the minimal zeta complex, consisting of only REV3L and REV7. The sequence is that of DNA polymerase delta subunit 2 (Pold2) from Mus musculus (Mouse).